A 242-amino-acid polypeptide reads, in one-letter code: MKRMQETSFLFGSKAFLEALDNQLQIKKVNLSDKHQKLLGLIKKRGLRYEMHSSQWFHQQFRHINHQEFVCVINPNQMLKTIEQLIQITDSKSTSTLVMLHEIQDPHNFGAILRTCMAAEVDGIIFKKHNQAPINSTVIRTSMGTVFYQNLVQVTNLSYAITTLQKHGFWTVATTLDERLKPKDYRQVDFDKRILLVGNEDKGLNALLLKNADLKVKIPMNPKLNSLNVSVAVGIILFGWKS.

3 residues coordinate S-adenosyl-L-methionine: G198, I218, and L227.

It belongs to the class IV-like SAM-binding methyltransferase superfamily. RNA methyltransferase TrmH family.

This is an uncharacterized protein from Mycoplasma pneumoniae (strain ATCC 29342 / M129 / Subtype 1) (Mycoplasmoides pneumoniae).